A 531-amino-acid polypeptide reads, in one-letter code: UPF0159 protein CPn_0746/CP_1126/CPj0746/CpB0774 (531 aa).

ThyX domains follow at residues 38 to 274 (KGAL…AEPH) and 309 to 511 (PSVQ…FKFV).

Belongs to the UPF0159 family.

This is UPF0159 protein CPn_0746/CP_1126/CPj0746/CpB0774 from Chlamydia pneumoniae (Chlamydophila pneumoniae).